The primary structure comprises 360 residues: Phospho-N-acetylmuramoyl-pentapeptide-transferase (360 aa).

10 helical membrane passes run 26–46 (AILG…AMIR), 70–90 (GTPT…TLLW), 97–117 (FVWV…IDDY), 134–154 (FFWQ…TAQA), 168–188 (VAIQ…VGAS), 199–219 (GLAI…AYLS), 236–256 (VGDL…FLWF), 263–283 (VFMG…LAVV), 288–308 (IVLV…IMQV), and 338–358 (VIVR…ATLK).

It belongs to the glycosyltransferase 4 family. MraY subfamily. It depends on Mg(2+) as a cofactor.

Its subcellular location is the cell inner membrane. It carries out the reaction UDP-N-acetyl-alpha-D-muramoyl-L-alanyl-gamma-D-glutamyl-meso-2,6-diaminopimeloyl-D-alanyl-D-alanine + di-trans,octa-cis-undecaprenyl phosphate = di-trans,octa-cis-undecaprenyl diphospho-N-acetyl-alpha-D-muramoyl-L-alanyl-D-glutamyl-meso-2,6-diaminopimeloyl-D-alanyl-D-alanine + UMP. It participates in cell wall biogenesis; peptidoglycan biosynthesis. In terms of biological role, catalyzes the initial step of the lipid cycle reactions in the biosynthesis of the cell wall peptidoglycan: transfers peptidoglycan precursor phospho-MurNAc-pentapeptide from UDP-MurNAc-pentapeptide onto the lipid carrier undecaprenyl phosphate, yielding undecaprenyl-pyrophosphoryl-MurNAc-pentapeptide, known as lipid I. This Thioalkalivibrio sulfidiphilus (strain HL-EbGR7) protein is Phospho-N-acetylmuramoyl-pentapeptide-transferase.